The sequence spans 724 residues: Polyribonucleotide nucleotidyltransferase (724 aa).

Asp488 and Asp494 together coordinate Mg(2+). The 60-residue stretch at 555–614 folds into the KH domain; sequence PRMITVKINPEKIRDVIGKGGSTIQALTKETGCTIDIGEDGTITIASTSSEGMAEAKRRI. The S1 motif domain occupies 624–692; it reads GKIYNGTVLK…EKGRMRLSIK (69 aa). Residues 697–724 are disordered; the sequence is EEGDVPVAAPQAPGAGDAASQQQQQQQQ. The span at 701–724 shows a compositional bias: low complexity; sequence VPVAAPQAPGAGDAASQQQQQQQQ.

This sequence belongs to the polyribonucleotide nucleotidyltransferase family. It depends on Mg(2+) as a cofactor.

The protein resides in the cytoplasm. It carries out the reaction RNA(n+1) + phosphate = RNA(n) + a ribonucleoside 5'-diphosphate. In terms of biological role, involved in mRNA degradation. Catalyzes the phosphorolysis of single-stranded polyribonucleotides processively in the 3'- to 5'-direction. The sequence is that of Polyribonucleotide nucleotidyltransferase from Ralstonia pickettii (strain 12J).